We begin with the raw amino-acid sequence, 232 residues long: 7-cyano-7-deazaguanine synthase (232 aa).

8–18 (FSGGQDSTTCL) contributes to the ATP binding site. Zn(2+) contacts are provided by Cys189, Cys198, Cys201, and Cys204.

It belongs to the QueC family. Zn(2+) serves as cofactor.

It carries out the reaction 7-carboxy-7-deazaguanine + NH4(+) + ATP = 7-cyano-7-deazaguanine + ADP + phosphate + H2O + H(+). It participates in purine metabolism; 7-cyano-7-deazaguanine biosynthesis. Functionally, catalyzes the ATP-dependent conversion of 7-carboxy-7-deazaguanine (CDG) to 7-cyano-7-deazaguanine (preQ(0)). This chain is 7-cyano-7-deazaguanine synthase, found in Photorhabdus laumondii subsp. laumondii (strain DSM 15139 / CIP 105565 / TT01) (Photorhabdus luminescens subsp. laumondii).